Consider the following 553-residue polypeptide: Formate--tetrahydrofolate ligase 2 (553 aa).

63–70 is an ATP binding site; that stretch reads TSAGEGKS.

Belongs to the formate--tetrahydrofolate ligase family.

The enzyme catalyses (6S)-5,6,7,8-tetrahydrofolate + formate + ATP = (6R)-10-formyltetrahydrofolate + ADP + phosphate. The protein operates within one-carbon metabolism; tetrahydrofolate interconversion. In Lactobacillus acidophilus (strain ATCC 700396 / NCK56 / N2 / NCFM), this protein is Formate--tetrahydrofolate ligase 2.